A 250-amino-acid chain; its full sequence is MHYSTEAIVLKNIPYGEADLIVTYLTKNYGLLNLFAKSPRKIKSRFGSSLEPLTYSQISFIGKEDNLQKIIQSDIIHPFQTIRENYRLFLQIANALRFLIQALPKKEPNSELFYLLLNTLLYLEKRIKPDNYILFLKVRGLSILGYLPDFKNCGVCRQELKEEFYYSSGFIICKKCSSSYHYSSSALPIPISQGVIKLLKEISTWTLNFLERVKISDKLFNEMEKFLQNHIFTVLGYNKTWDTEKNITAS.

Belongs to the RecO family.

Involved in DNA repair and RecF pathway recombination. This Thermodesulfovibrio yellowstonii (strain ATCC 51303 / DSM 11347 / YP87) protein is DNA repair protein RecO.